A 347-amino-acid chain; its full sequence is Haptoglobin (347 aa).

A signal peptide spans 1 to 18; the sequence is MRALGAVITLLLWGQLFA. Positions 31-88 constitute a Sushi domain; it reads DSCPKPPEIANGYVEHLVRYQCKNYYRLRTEGDGVYALNSEKQWVNKAVGEQLPECEA. 2 cysteine pairs are disulfide-bonded: Cys-52–Cys-86 and Cys-90–Cys-207. The Peptidase S1 domain maps to 103 to 345; the sequence is IIGGSLDAKG…ILDWIQKTIA (243 aa). 5 N-linked (GlcNAc...) asparagine glycosylation sites follow: Asn-148, Asn-152, Asn-182, Asn-230, and Asn-256. 2 disulfides stabilise this stretch: Cys-250–Cys-281 and Cys-292–Cys-322. The segment at 259-264 is interaction with CD163; sequence VPENKI.

Belongs to the peptidase S1 family. Tetramer of two alpha and two beta chains; disulfide-linked. The hemoglobin/haptoglobin complex is composed of a haptoglobin dimer bound to two hemoglobin alpha-beta dimers. Interacts with CD163. Interacts with ERGIC3. Expressed by the liver and secreted in plasma.

The protein resides in the secreted. Functionally, as a result of hemolysis, hemoglobin is found to accumulate in the kidney and is secreted in the urine. Haptoglobin captures, and combines with free plasma hemoglobin to allow hepatic recycling of heme iron and to prevent kidney damage. Haptoglobin also acts as an antioxidant, has antibacterial activity and plays a role in modulating many aspects of the acute phase response. Hemoglobin/haptoglobin complexes are rapidly cleared by the macrophage CD163 scavenger receptor expressed on the surface of liver Kupfer cells through an endocytic lysosomal degradation pathway. This chain is Haptoglobin (HP), found in Oryctolagus cuniculus (Rabbit).